An 841-amino-acid polypeptide reads, in one-letter code: Tax1-binding protein 1 homolog (841 aa).

Coiled-coil stretches lie at residues 173–560 (TTVL…EKAR) and 612–640 (YSIE…KQAG). Positions 419-441 (MRDEQQQKSNPFAKKDQGADNNR) are disordered. A compositionally biased stretch (basic and acidic residues) spans 431–441 (AKKDQGADNNR). The segment at 678 to 759 (YASQETRDGA…NVNFEQTPDP (82 aa)) is disordered. The span at 741-751 (DEDDDDDDDNV) shows a compositional bias: acidic residues. 2 UBZ1-type zinc fingers span residues 779-805 (NKKC…VESH) and 806-832 (WKVC…VQTH). 8 residues coordinate Zn(2+): Cys-782, Cys-785, His-801, His-805, Cys-809, Cys-812, His-828, and His-832.

May have an anti-apoptotic activity. This Xenopus tropicalis (Western clawed frog) protein is Tax1-binding protein 1 homolog (tax1bp1).